We begin with the raw amino-acid sequence, 766 residues long: Phospholipid phosphatase-related protein type 4 (766 aa).

S37 is modified (phosphoserine). A run of 3 helical transmembrane segments spans residues 68–88 (LPCF…SLYF), 120–140 (AIPF…TIMV), and 179–199 (FVGV…IIQL). N-linked (GlcNAc...) asparagine glycans are attached at residues N215 and N220. Residues 248-268 (SFPSQHATLAAFAAVYVSMYF) traverse the membrane as a helical segment. N269 carries an N-linked (GlcNAc...) asparagine glycan. 2 helical membrane-spanning segments follow: residues 277-297 (KLLK…CGLT) and 309-329 (VYCG…YAVG). Phosphoserine is present on S347. A glycan (N-linked (GlcNAc...) asparagine) is linked at N363. S386 is modified (phosphoserine). N-linked (GlcNAc...) asparagine glycosylation is present at N433. S439 bears the Phosphoserine mark. Residues 454–494 (SKNESRKMSLQVMDTEPEGQSPPRSIEMRSSSEPSRVGVNG) form a disordered region. N456 carries N-linked (GlcNAc...) asparagine glycosylation. 2 positions are modified to phosphoserine: S462 and S474. N-linked (GlcNAc...) asparagine glycosylation is found at N515, N545, and N570. A Phosphoserine modification is found at S608. 3 disordered regions span residues 634-654 (PIIQ…KWKA), 672-701 (DSES…HHHH), and 742-766 (ERSN…AYKD). The span at 672–697 (DSESCESLKDSFGSGDRKRSNIDSNE) shows a compositional bias: basic and acidic residues. Polar residues predominate over residues 743-752 (RSNSPENTRN).

This sequence belongs to the PA-phosphatase related phosphoesterase family. O-glycosylated. Probably at Ser-347. As to expression, brain-specific, it is exclusively expressed in neurons (at protein level).

The protein resides in the postsynaptic density membrane. Postsynaptic density membrane protein that indirectly regulates glutamatergic synaptic transmission through lysophosphatidic acid (LPA)-mediated signaling pathways. Binds lysophosphatidic acid (LPA) and mediates its internalization into cells. Could act as receptor or a transporter of this lipid at the post-synaptic membrane. Modulates lysophosphatidic acid (LPA) activity in neuron axonal outgrowth during development by attenuating phospholipid-induced axon collapse. This chain is Phospholipid phosphatase-related protein type 4, found in Mus musculus (Mouse).